The sequence spans 661 residues: Protein WHI3 (661 aa).

The span at 14-31 (ASSSDNVVSSTTNTHNIS) shows a compositional bias: low complexity. Positions 14–58 (ASSSDNVVSSTTNTHNISPSHRSSLNLNTTSHPHEASGRGSASGE) are disordered. A compositionally biased stretch (polar residues) spans 32–44 (PSHRSSLNLNTTS). The residue at position 231 (Ser231) is a Phosphoserine. 3 stretches are compositionally biased toward low complexity: residues 237 to 272 (DPFS…SPQQ), 383 to 409 (NTSA…SASS), and 496 to 508 (KNNS…SNIT). Disordered regions lie at residues 237–280 (DPFS…QVNS), 383–410 (NTSA…ASSQ), 469–508 (EHMY…SNIT), and 613–661 (SSKG…HIKN). The RRM domain occupies 538-625 (NTLYVGNLPS…GGIRLSFSKN (88 aa)). Low complexity predominate over residues 628-647 (GVRGPNSRRGGSGNPNPNVN). A compositionally biased stretch (polar residues) spans 648 to 661 (MLSSYNSNVGHIKN).

Functionally, involved in size control and cell cycle. This Saccharomyces cerevisiae (strain ATCC 204508 / S288c) (Baker's yeast) protein is Protein WHI3 (WHI3).